A 1046-amino-acid chain; its full sequence is UDP-N-acetylglucosamine--peptide N-acetylglucosaminyltransferase 110 kDa subunit (1046 aa).

N-acetylalanine is present on Ala-2. Residues Ser-3 and Ser-4 each carry the phosphoserine; by GSK3-beta; alternate modification. Residues Ser-3 and Ser-4 are each glycosylated (O-linked (GlcNAc) serine; alternate). A Phosphoserine modification is found at Ser-20. TPR repeat units follow at residues 21 to 54 (FQGLAELAHREYQAGDFEAAERHCMQLWRQEPDN), 89 to 122 (AEAYSNLGNVYKERGQLQEAIEHYRHALRLKPDF), 123 to 156 (IDGYINLAAALVAAGDMEGAVQAYVSALQYNPDL), 157 to 190 (YCVRSDLGNLLKALGRLEEAKACYLKAIETQPNF), 191 to 224 (AVAWSNLGCVFNAQGEIWLAIHHFEKAVTLDPNF), 225 to 258 (LDAYINLGNVLKEARIFDRAVAAYLRALSLSPNH), 259 to 292 (AVVHGNLACVYYEQGLIDLAIDTYRRAIELQPHF), 293 to 326 (PDAYCNLANALKEKGSVAEAEDCYNTALRLCPTH), 327 to 360 (ADSLNNLANIKREQGNIEEAVRLYRKALEVFPEF), 361 to 394 (AAAHSNLASVLQQQGKLQEALMHYKEAIRISPTF), 395 to 428 (ADAYSNMGNTLKEMQDVQGALQCYTRAIQINPAF), and 429 to 462 (ADAHSNLASIHKDSGNIPEAIASYRTALKLKPDF). The O-linked (GlcNAc) serine; by autocatalysis glycan is linked to Ser-399. Thr-454 is subject to Phosphothreonine. The TPR 13; truncated repeat unit spans residues 463–473 (PDAYCNLAHCL). The DFP motif signature appears at 464–466 (DAY). The short motif at 487–503 (KKLVSIVADQLEKNRLP) is the Nuclear localization signal element. Residue His-508 is the Proton acceptor of the active site. Residues Gln-849, Lys-852, 906–908 (APK), 911–914 (HVRR), 930–932 (HTT), and Asp-935 each bind UDP. Position 989 is a phosphotyrosine (Tyr-989). The segment at 991 to 1010 (KKIRGKVWKQRISSPLFNTK) is required for phosphatidylinositol 3,4,5-triphosphate binding.

It belongs to the glycosyltransferase 41 family. O-GlcNAc transferase subfamily. Monomer; may exist in different oligomerization states in cells. Homotrimer, oligomerizes via TPR repeats 6 and 7. Trimerization is not necessary for activity in vitro, however it increases affinity for UDP-GlcNAc. Component of a THAP1/THAP3-HCFC1-OGT complex. Component of the NSL complex at least composed of MOF/KAT8, KANSL1, KANSL2, KANSL3, MCRS1, PHF20, OGT1/OGT, WDR5 and HCFC1. Found in a complex with KIF5B, RHOT1, RHOT2 and TRAK1. Found in a complex composed of at least SINHCAF, SIN3A, HDAC1, SAP30, RBBP4, OGT and TET1. Component of a complex composed of KMT2E/MLL5, OGT and USP7; the complex stabilizes KMT2E/MLL5, preventing KMT2E/MLL5 ubiquitination and proteasomal-mediated degradation. Interacts (via TPRs 1-6) with SIN3A; the interaction mediates transcriptional repression in parallel with histone deacetylase. Interacts (via TPR 5-6) with TET1, TET2 and TET3. Interacts (via TPR repeats 6 and 7) with ATXN10. Interacts with NSD2. Interacts with PROSER1; this interaction mediates TET2 O-GlcNAcylation and stability by promoting the interaction between OGT and TET2. Post-translationally, ubiquitinated by the SCF(FBXO31) complex, leading to its proteasomal degradation. Phosphorylation on Ser-3 or Ser-4 by GSK3-beta positively regulates its activity. Phosphorylation at Thr-454 by AMPK promotes nuclear localization. In terms of processing, glycosylated via autocatalysis; O-GlcNAcylation at Ser-399 promotes nuclear localization.

It localises to the nucleus. It is found in the cytoplasm. It catalyses the reaction L-seryl-[protein] + UDP-N-acetyl-alpha-D-glucosamine = 3-O-(N-acetyl-beta-D-glucosaminyl)-L-seryl-[protein] + UDP + H(+). The enzyme catalyses L-threonyl-[protein] + UDP-N-acetyl-alpha-D-glucosamine = 3-O-(N-acetyl-beta-D-glucosaminyl)-L-threonyl-[protein] + UDP + H(+). It participates in protein modification; protein glycosylation. Its activity is regulated as follows. Subject to product inhibition by UDP. Its function is as follows. Catalyzes the transfer of a single N-acetylglucosamine from UDP-GlcNAc to a serine or threonine residue in cytoplasmic and nuclear proteins resulting in their modification with a beta-linked N-acetylglucosamine (O-GlcNAc). Glycosylates a large and diverse number of proteins including histone H2B, AKT1, AMPK, ATG4B, CAPRIN1, EZH2, FNIP1, GSDMD, KRT7, LMNA, LMNB1, LMNB2, RPTOR, HOXA1, PFKL, KMT2E/MLL5, MAPT/TAU, TET2, RBL2, RET, NOD2 and HCFC1. Can regulate their cellular processes via cross-talk between glycosylation and phosphorylation or by affecting proteolytic processing. Involved in insulin resistance in muscle and adipocyte cells via glycosylating insulin signaling components and inhibiting the 'Thr-308' phosphorylation of AKT1, enhancing IRS1 phosphorylation and attenuating insulin signaling. Involved in glycolysis regulation by mediating glycosylation of 6-phosphofructokinase PFKL, inhibiting its activity. Plays a key role in chromatin structure by mediating O-GlcNAcylation of 'Ser-112' of histone H2B: recruited to CpG-rich transcription start sites of active genes via its interaction with TET proteins (TET1, TET2 or TET3). As part of the NSL complex indirectly involved in acetylation of nucleosomal histone H4 on several lysine residues. O-GlcNAcylation of 'Ser-75' of EZH2 increases its stability, and facilitating the formation of H3K27me3 by the PRC2/EED-EZH2 complex. Stabilizes KMT2E/MLL5 by mediating its glycosylation, thereby preventing KMT2E/MLL5 ubiquitination. Regulates circadian oscillation of the clock genes and glucose homeostasis in the liver. Stabilizes clock proteins BMAL1 and CLOCK through O-glycosylation, which prevents their ubiquitination and subsequent degradation. Promotes the CLOCK-BMAL1-mediated transcription of genes in the negative loop of the circadian clock such as PER1/2 and CRY1/2. O-glycosylates HCFC1 and regulates its proteolytic processing and transcriptional activity. Component of a THAP1/THAP3-HCFC1-OGT complex that is required for the regulation of the transcriptional activity of RRM1. Regulates mitochondrial motility in neurons by mediating glycosylation of TRAK1. Promotes autophagy by mediating O-glycosylation of ATG4B. Acts as a regulator of mTORC1 signaling by mediating O-glycosylation of RPTOR and FNIP1: O-GlcNAcylation of RPTOR in response to glucose sufficiency promotes activation of the mTORC1 complex. This Sus scrofa (Pig) protein is UDP-N-acetylglucosamine--peptide N-acetylglucosaminyltransferase 110 kDa subunit (OGT).